The sequence spans 118 residues: Cell division protein SepF (118 aa).

Residues 1-12 (MGIMSKILGGGG) form an important for localization in a ring-like structure at midcell region.

In terms of assembly, homodimer. Does not oligomerize. Interacts with FtsZ2.

The protein resides in the cytoplasm. Functionally, involved in cell division. Probably acts as a membrane anchor for FstZ2, tethering its filaments to the division site. May be involved in septum closure. This Haloferax volcanii (strain ATCC 29605 / DSM 3757 / JCM 8879 / NBRC 14742 / NCIMB 2012 / VKM B-1768 / DS2) (Halobacterium volcanii) protein is Cell division protein SepF.